The sequence spans 325 residues: Elongation factor P--(R)-beta-lysine ligase (325 aa).

76–78 (SPE) provides a ligand contact to substrate. Residues 100-102 (RNE) and Asn109 contribute to the ATP site. Position 118 (Tyr118) interacts with substrate. 244–245 (EL) is an ATP binding site. Substrate is bound at residue Glu251. Gly300 contributes to the ATP binding site.

It belongs to the class-II aminoacyl-tRNA synthetase family. EpmA subfamily. Homodimer.

It catalyses the reaction D-beta-lysine + L-lysyl-[protein] + ATP = N(6)-((3R)-3,6-diaminohexanoyl)-L-lysyl-[protein] + AMP + diphosphate + H(+). With EpmB is involved in the beta-lysylation step of the post-translational modification of translation elongation factor P (EF-P). Catalyzes the ATP-dependent activation of (R)-beta-lysine produced by EpmB, forming a lysyl-adenylate, from which the beta-lysyl moiety is then transferred to the epsilon-amino group of a conserved specific lysine residue in EF-P. This Proteus mirabilis (strain HI4320) protein is Elongation factor P--(R)-beta-lysine ligase.